The following is a 619-amino-acid chain: Teichoic acid poly(ribitol-phosphate) polymerase (619 aa).

It belongs to the CDP-glycerol glycerophosphotransferase family.

The protein localises to the cell membrane. The catalysed reaction is 4-O-[1-D-ribitylphospho-(2R)-1-glycerylphospho]-N-acetyl-beta-D-mannosaminyl-(1-&gt;4)-N-acetyl-alpha-D-glucosaminyl di-trans,octa-cis-undecaprenyl diphosphate + n CDP-L-ribitol = 4-O-[(D-ribitylphospho)(n)-D-ribitylphospho-(2R)-glycerylphospho]-N-acetyl-beta-D-mannosaminyl-(1-&gt;4)-N-acetyl-alpha-D-glucosaminyl di-trans,octa-cis-undecaprenyl diphosphate + n CMP + n H(+). Its pathway is cell wall biogenesis; poly(ribitol phosphate) teichoic acid biosynthesis. Functionally, responsible for the polymerization of the main chain of the major teichoic acid by sequential transfer of ribitol phosphate units from CDP-ribitol to the glycerol phosphate attached to the disaccharide linkage unit. Synthesizes polymers of up to 40 ribitol phosphate units in length. This Bacillus spizizenii (strain ATCC 23059 / NRRL B-14472 / W23) (Bacillus subtilis subsp. spizizenii) protein is Teichoic acid poly(ribitol-phosphate) polymerase (tarL).